The sequence spans 264 residues: S-adenosylmethionine decarboxylase proenzyme (264 aa).

Residue Ser-112 is the Schiff-base intermediate with substrate; via pyruvic acid of the active site. At Ser-112 the chain carries Pyruvic acid (Ser); by autocatalysis. His-117 (proton acceptor; for processing activity) is an active-site residue. Cys-140 acts as the Proton donor; for catalytic activity in catalysis.

It belongs to the prokaryotic AdoMetDC family. Type 2 subfamily. Heterooctamer of four alpha and four beta chains arranged as a tetramer of alpha/beta heterodimers. The cofactor is pyruvate. Post-translationally, is synthesized initially as an inactive proenzyme. Formation of the active enzyme involves a self-maturation process in which the active site pyruvoyl group is generated from an internal serine residue via an autocatalytic post-translational modification. Two non-identical subunits are generated from the proenzyme in this reaction, and the pyruvate is formed at the N-terminus of the alpha chain, which is derived from the carboxyl end of the proenzyme. The post-translation cleavage follows an unusual pathway, termed non-hydrolytic serinolysis, in which the side chain hydroxyl group of the serine supplies its oxygen atom to form the C-terminus of the beta chain, while the remainder of the serine residue undergoes an oxidative deamination to produce ammonia and the pyruvoyl group blocking the N-terminus of the alpha chain.

The enzyme catalyses S-adenosyl-L-methionine + H(+) = S-adenosyl 3-(methylsulfanyl)propylamine + CO2. Its pathway is amine and polyamine biosynthesis; S-adenosylmethioninamine biosynthesis; S-adenosylmethioninamine from S-adenosyl-L-methionine: step 1/1. Its function is as follows. Catalyzes the decarboxylation of S-adenosylmethionine to S-adenosylmethioninamine (dcAdoMet), the propylamine donor required for the synthesis of the polyamines spermine and spermidine from the diamine putrescine. This is S-adenosylmethionine decarboxylase proenzyme from Salmonella agona (strain SL483).